Here is an 803-residue protein sequence, read N- to C-terminus: PR domain zinc finger protein 4 (803 aa).

One can recognise an SET domain in the interval 408-532 (KQLVLRQSIV…PESELLFYYS (125 aa)). 5 consecutive C2H2-type zinc fingers follow at residues 593–615 (WKCS…FMGH), 621–643 (HKCD…LKIH), 649–671 (YRCT…MVIH), 677–699 (LKCD…VLIH), and 705–727 (IKCP…LNSH). Residues 733-755 (YVCEKCTKAYLTKYHLTRHLKTC) form a C2H2-type 6; degenerate zinc finger. A disordered region spans residues 757-803 (EPSSSSSAQEEEDDESEEEDLADSMRTEDCRMGSAVYSTDESLSAHK). Acidic residues predominate over residues 765–778 (QEEEDDESEEEDLA). Residues 792–803 (VYSTDESLSAHK) show a composition bias toward polar residues.

The protein belongs to the class V-like SAM-binding methyltransferase superfamily.

It is found in the nucleus. Functionally, may function as a transcription factor involved in cell differentiation. The protein is PR domain zinc finger protein 4 (Prdm4) of Mus musculus (Mouse).